Here is an 803-residue protein sequence, read N- to C-terminus: Leucine--tRNA ligase (803 aa).

Residues 40 to 51 (PYPSGAGLHVGH) carry the 'HIGH' region motif. Positions 575-579 (KMSKS) match the 'KMSKS' region motif. Lysine 578 serves as a coordination point for ATP.

Belongs to the class-I aminoacyl-tRNA synthetase family.

Its subcellular location is the cytoplasm. It catalyses the reaction tRNA(Leu) + L-leucine + ATP = L-leucyl-tRNA(Leu) + AMP + diphosphate. This Listeria innocua serovar 6a (strain ATCC BAA-680 / CLIP 11262) protein is Leucine--tRNA ligase.